The primary structure comprises 213 residues: StAR-related lipid transfer protein 5 (213 aa).

The region spanning 1–213 is the START domain; the sequence is MDPSWATQES…LQKAVRKFHH (213 aa).

As to expression, expressed in most tissues, with highest levels in liver and in kidney.

May be involved in the intracellular transport of sterols or other lipids. May bind cholesterol or other sterols. The protein is StAR-related lipid transfer protein 5 (Stard5) of Mus musculus (Mouse).